Consider the following 331-residue polypeptide: DSC E3 ubiquitin ligase complex subunit D (331 aa).

Asparagine 26 carries N-linked (GlcNAc...) asparagine glycosylation. Helical transmembrane passes span 63-83, 107-127, and 159-179; these read ILIY…ILFA, PFIG…NFFT, and LFLL…LIVE. The segment at 188–225 is disordered; the sequence is STTSTEILRVQDHDSEERGVHRTRPESRSSVVGAELDE. The span at 196–214 shows a compositional bias: basic and acidic residues; it reads RVQDHDSEERGVHRTRPES.

Component of the DSC E3 ubiquitin ligase complex composed of dscA, dscB, dscC and dscD.

It localises to the endoplasmic reticulum membrane. It functions in the pathway protein modification; protein ubiquitination. In terms of biological role, component of the DSC E3 ubiquitin ligase complex which is required for the srbA transcriptional activator proteolytic cleavage to release the soluble transcription factor from the membrane in low oxygen or sterol conditions. Required for growth during hypoxia and triazole drug susceptibility, as well as for virulence in a murine model of invasive pulmonary aspergillosis (IPA). The sequence is that of DSC E3 ubiquitin ligase complex subunit D from Aspergillus fumigatus (strain ATCC MYA-4609 / CBS 101355 / FGSC A1100 / Af293) (Neosartorya fumigata).